Reading from the N-terminus, the 85-residue chain is Small ribosomal subunit protein uS17 (85 aa).

Belongs to the universal ribosomal protein uS17 family. Part of the 30S ribosomal subunit.

One of the primary rRNA binding proteins, it binds specifically to the 5'-end of 16S ribosomal RNA. The chain is Small ribosomal subunit protein uS17 from Haemophilus influenzae (strain 86-028NP).